We begin with the raw amino-acid sequence, 274 residues long: 2,3,4,5-tetrahydropyridine-2,6-dicarboxylate N-succinyltransferase (274 aa).

Substrate-binding residues include arginine 104 and aspartate 141.

This sequence belongs to the transferase hexapeptide repeat family. In terms of assembly, homotrimer.

It is found in the cytoplasm. It catalyses the reaction (S)-2,3,4,5-tetrahydrodipicolinate + succinyl-CoA + H2O = (S)-2-succinylamino-6-oxoheptanedioate + CoA. It participates in amino-acid biosynthesis; L-lysine biosynthesis via DAP pathway; LL-2,6-diaminopimelate from (S)-tetrahydrodipicolinate (succinylase route): step 1/3. The protein is 2,3,4,5-tetrahydropyridine-2,6-dicarboxylate N-succinyltransferase of Escherichia coli O139:H28 (strain E24377A / ETEC).